Reading from the N-terminus, the 239-residue chain is uncharacterized protein (239 aa).

Residues 1 to 19 (MPLLHRTIIFLQLLGTISS) form the signal peptide. Asparagine 44, asparagine 58, asparagine 72, asparagine 92, asparagine 109, asparagine 136, asparagine 172, asparagine 192, and asparagine 213 each carry an N-linked (GlcNAc...) asparagine glycan.

Its subcellular location is the secreted. This is an uncharacterized protein from Caenorhabditis elegans.